The sequence spans 632 residues: Actin-related protein 8 (632 aa).

The span at 1-30 (MTQAEREQENGKEKEKEREKEKEKEKEQRG) shows a compositional bias: basic and acidic residues. A disordered region spans residues 1 to 43 (MTQAEREQENGKEKEKEREKEKEKEKEQRGIKRPIAPPVIPEP). Residue 288 to 291 (DVGD) participates in ATP binding. 2 disordered regions span residues 410 to 429 (MTSLQHRSQGDPEDPHDEHY) and 434 to 494 (QSKQ…GGAE). A compositionally biased stretch (low complexity) spans 434–443 (QSKQDQSSKA).

The protein belongs to the actin family. ARP8 subfamily. As to quaternary structure, component of the chromatin remodeling INO80 complex; specifically part of a complex module associated with the DBINO domain of INO80. Exists as monomers and dimers, but the dimer is most probably the biologically relevant form required for stable interactions with histones that exploits the twofold symmetry of the nucleosome core.

The protein localises to the nucleus. Its subcellular location is the chromosome. Plays an important role in the functional organization of mitotic chromosomes. Exhibits low basal ATPase activity, and unable to polymerize. In terms of biological role, proposed core component of the chromatin remodeling INO80 complex which is involved in transcriptional regulation, DNA replication and probably DNA repair. Required for the recruitment of INO80 (and probably the INO80 complex) to sites of DNA damage Strongly prefer nucleosomes and H3-H4 tetramers over H2A-H2B dimers, suggesting it may act as a nucleosome recognition module within the complex. The chain is Actin-related protein 8 (actr8) from Salmo salar (Atlantic salmon).